Here is a 306-residue protein sequence, read N- to C-terminus: Protein SEC13 homolog (306 aa).

WD repeat units follow at residues 11-50 (QHRDAIHDAQLNIYGNRLATCGSDRLVKIFEVRPNGQSYP), 56-97 (GHNG…WQKT), 102-143 (THEA…QQWQ), 150-195 (CHDQ…NEWT), 202-245 (CHKD…TAEW), and 252-291 (QAPCALYHASFSPCGSFLSVSGDDNMITLWRENLQGQWIK).

The protein belongs to the WD repeat SEC13 family. In terms of assembly, probably part of the GATOR complex.

Its subcellular location is the cytoplasmic vesicle. The protein localises to the COPII-coated vesicle membrane. The protein resides in the endoplasmic reticulum membrane. It is found in the nucleus. It localises to the nuclear pore complex. Its subcellular location is the lysosome membrane. Its function is as follows. Functions as a component of the nuclear pore complex (NPC) and the COPII coat. As a component of the GATOR complex may function in the amino acid-sensing branch of the TORC1 signaling pathway. This Caenorhabditis briggsae protein is Protein SEC13 homolog.